The chain runs to 129 residues: Sulfurtransferase TusD (129 aa).

C79 functions as the Cysteine persulfide intermediate in the catalytic mechanism.

It belongs to the DsrE/TusD family. In terms of assembly, heterohexamer, formed by a dimer of trimers. The hexameric TusBCD complex contains 2 copies each of TusB, TusC and TusD. The TusBCD complex interacts with TusE.

It localises to the cytoplasm. Its function is as follows. Part of a sulfur-relay system required for 2-thiolation of 5-methylaminomethyl-2-thiouridine (mnm(5)s(2)U) at tRNA wobble positions. Accepts sulfur from TusA and transfers it in turn to TusE. The polypeptide is Sulfurtransferase TusD (Pectobacterium atrosepticum (strain SCRI 1043 / ATCC BAA-672) (Erwinia carotovora subsp. atroseptica)).